A 325-amino-acid polypeptide reads, in one-letter code: Protein VP6-B (325 aa).

Disordered stretches follow at residues 23 to 123 (INLI…TIGA) and 176 to 229 (VAEQ…EEQA). Composition is skewed to basic and acidic residues over residues 32-52 (ESGK…ESKD) and 61-79 (SQKK…DRRI). Positions 106 to 123 (KVGGGGGNADAGVGTIGA) are enriched in gly residues. Basic and acidic residues-rich tracts occupy residues 176–201 (VAEQ…AAER) and 210–226 (PHGD…KTSE).

Belongs to the orbivirus VP6 family.

The protein localises to the virion. Surrounds and interacts with the genomic dsRNA. Possesses ss- and dsRNA-binding capacity. Its hydrophilic nature and capability to bind ss- and dsRNA suggest that it interacts with BTV genomic RNA. In Bluetongue virus 10 (isolate USA) (BTV 10), this protein is Protein VP6-B (Segment-9).